Reading from the N-terminus, the 310-residue chain is Fe-S cluster assembly protein dre2 (310 aa).

The tract at residues 1–130 is N-terminal SAM-like domain; that stretch reads MSGRTLLLSP…KPDIEDMRAV (130 aa). The linker stretch occupies residues 131 to 203; it reads PLRLGRKKHD…EDLLDGSELA (73 aa). [2Fe-2S] cluster-binding residues include Cys212, Cys223, Cys226, and Cys228. The segment at 212-228 is fe-S binding site A; it reads CRPKAGRRRRACKDCTC. Positions 273, 276, 284, and 287 each coordinate [4Fe-4S] cluster. 2 short sequence motifs (cx2C motif) span residues 273–276 and 284–287; these read CGNC and CEGC. Residues 273-287 form a fe-S binding site B region; that stretch reads CGNCSLGDAFRCEGC.

The protein belongs to the anamorsin family. In terms of assembly, monomer. Interacts with tah18. Interacts with mia40. [2Fe-2S] cluster serves as cofactor. It depends on [4Fe-4S] cluster as a cofactor.

Its subcellular location is the cytoplasm. The protein localises to the mitochondrion intermembrane space. Functionally, component of the cytosolic iron-sulfur (Fe-S) protein assembly (CIA) machinery required for the maturation of extramitochondrial Fe-S proteins. Part of an electron transfer chain functioning in an early step of cytosolic Fe-S biogenesis, facilitating the de novo assembly of a [4Fe-4S] cluster on the scaffold complex cfd1-nbp35. Electrons are transferred to dre2 from NADPH via the FAD- and FMN-containing protein tah18. Tah18-dre2 are also required for the assembly of the diferric tyrosyl radical cofactor of ribonucleotide reductase (RNR), probably by providing electrons for reduction during radical cofactor maturation in the catalytic small subunit rnr2. This is Fe-S cluster assembly protein dre2 from Aspergillus clavatus (strain ATCC 1007 / CBS 513.65 / DSM 816 / NCTC 3887 / NRRL 1 / QM 1276 / 107).